The chain runs to 608 residues: Chaperone protein HtpG (608 aa).

The interval 1–332 (MQFQTEVNQL…VEDLPLNVSR (332 aa)) is a; substrate-binding. A b region spans residues 333–536 (EILQENQILK…KNKPDFAMQQ (204 aa)). The interval 537–608 (LLKQMGQEQN…LTKIINKAFS (72 aa)) is c.

It belongs to the heat shock protein 90 family. In terms of assembly, homodimer.

The protein localises to the cytoplasm. Molecular chaperone. Has ATPase activity. This Campylobacter jejuni subsp. jejuni serotype O:6 (strain 81116 / NCTC 11828) protein is Chaperone protein HtpG.